A 77-amino-acid polypeptide reads, in one-letter code: RNA-binding protein Hfq (77 aa).

A Sm domain is found at 10-70; it reads DIFLNSARKN…ITTVTPEKPI (61 aa).

It belongs to the Hfq family. As to quaternary structure, homohexamer.

In terms of biological role, RNA chaperone that binds small regulatory RNA (sRNAs) and mRNAs to facilitate mRNA translational regulation in response to envelope stress, environmental stress and changes in metabolite concentrations. Also binds with high specificity to tRNAs. The polypeptide is RNA-binding protein Hfq (Clostridium botulinum (strain Eklund 17B / Type B)).